The primary structure comprises 647 residues: Threonine--tRNA ligase (647 aa).

In terms of domain architecture, TGS spans 1–61 (MIKITFPDGA…EEDGSIEIVT (61 aa)). Residues 240 to 538 (DHRKLGKELD…LIETYKGAFP (299 aa)) are catalytic. Residues cysteine 334, histidine 385, and histidine 515 each contribute to the Zn(2+) site.

Belongs to the class-II aminoacyl-tRNA synthetase family. Homodimer. Zn(2+) serves as cofactor.

It is found in the cytoplasm. It catalyses the reaction tRNA(Thr) + L-threonine + ATP = L-threonyl-tRNA(Thr) + AMP + diphosphate + H(+). In terms of biological role, catalyzes the attachment of threonine to tRNA(Thr) in a two-step reaction: L-threonine is first activated by ATP to form Thr-AMP and then transferred to the acceptor end of tRNA(Thr). Also edits incorrectly charged L-seryl-tRNA(Thr). The chain is Threonine--tRNA ligase from Streptococcus pyogenes serotype M49 (strain NZ131).